The sequence spans 254 residues: Imidazole glycerol phosphate synthase subunit HisF (254 aa).

Catalysis depends on residues Asp-13 and Asp-132.

The protein belongs to the HisA/HisF family. As to quaternary structure, heterodimer of HisH and HisF.

The protein resides in the cytoplasm. It carries out the reaction 5-[(5-phospho-1-deoxy-D-ribulos-1-ylimino)methylamino]-1-(5-phospho-beta-D-ribosyl)imidazole-4-carboxamide + L-glutamine = D-erythro-1-(imidazol-4-yl)glycerol 3-phosphate + 5-amino-1-(5-phospho-beta-D-ribosyl)imidazole-4-carboxamide + L-glutamate + H(+). It participates in amino-acid biosynthesis; L-histidine biosynthesis; L-histidine from 5-phospho-alpha-D-ribose 1-diphosphate: step 5/9. Its function is as follows. IGPS catalyzes the conversion of PRFAR and glutamine to IGP, AICAR and glutamate. The HisF subunit catalyzes the cyclization activity that produces IGP and AICAR from PRFAR using the ammonia provided by the HisH subunit. The sequence is that of Imidazole glycerol phosphate synthase subunit HisF from Nautilia profundicola (strain ATCC BAA-1463 / DSM 18972 / AmH).